The following is a 117-amino-acid chain: Ribonuclease P protein component (117 aa).

The protein belongs to the RnpA family. In terms of assembly, consists of a catalytic RNA component (M1 or rnpB) and a protein subunit.

It carries out the reaction Endonucleolytic cleavage of RNA, removing 5'-extranucleotides from tRNA precursor.. RNaseP catalyzes the removal of the 5'-leader sequence from pre-tRNA to produce the mature 5'-terminus. It can also cleave other RNA substrates such as 4.5S RNA. The protein component plays an auxiliary but essential role in vivo by binding to the 5'-leader sequence and broadening the substrate specificity of the ribozyme. The polypeptide is Ribonuclease P protein component (Aliivibrio fischeri (strain ATCC 700601 / ES114) (Vibrio fischeri)).